The chain runs to 378 residues: uncharacterized protein (378 aa).

This is an uncharacterized protein from Nostoc sp. (strain PCC 7120 / SAG 25.82 / UTEX 2576).